The chain runs to 141 residues: ATP synthase epsilon chain (141 aa).

It belongs to the ATPase epsilon chain family. F-type ATPases have 2 components, CF(1) - the catalytic core - and CF(0) - the membrane proton channel. CF(1) has five subunits: alpha(3), beta(3), gamma(1), delta(1), epsilon(1). CF(0) has three main subunits: a, b and c.

Its subcellular location is the cell inner membrane. Its function is as follows. Produces ATP from ADP in the presence of a proton gradient across the membrane. The protein is ATP synthase epsilon chain of Pseudomonas savastanoi pv. phaseolicola (strain 1448A / Race 6) (Pseudomonas syringae pv. phaseolicola (strain 1448A / Race 6)).